Reading from the N-terminus, the 503-residue chain is Maturase K (503 aa).

This sequence belongs to the intron maturase 2 family. MatK subfamily.

It is found in the plastid. The protein resides in the chloroplast. In terms of biological role, usually encoded in the trnK tRNA gene intron. Probably assists in splicing its own and other chloroplast group II introns. In Diospyros kaki (Kaki persimmon), this protein is Maturase K.